A 104-amino-acid chain; its full sequence is Flagellar hook-basal body complex protein FliE (104 aa).

This sequence belongs to the FliE family.

It localises to the bacterial flagellum basal body. This chain is Flagellar hook-basal body complex protein FliE, found in Escherichia coli O6:K15:H31 (strain 536 / UPEC).